We begin with the raw amino-acid sequence, 431 residues long: MAKIINVIGREIMDSRGNPTVEAEVHLEGGFVGMAAAPSGASTGSREALELRDGDKSRYLGKGVLTAVANVNGVIRTALLGKDATAQAELDQIMIDLDGTENKDKLGANAILAVSLAAAKAAAASKGIPLYAHIAELNGTPGQYSMPVPMMNILNGGEHADNNVDIQEFMVQPVGAKTFREALRMGAEIFHTLKKVLHDKGLSTSVGDEGGFAPNLASNADALAVIKEAVELAGYKLGTDVTLALDCAASEFYKDGKYDLAGEGKVFDSNGFSDFLKSLADQYPIVSIEDGLDESDWDGWAYQTQIMGDKIQLVGDDLFVTNTKILTRGIENGIANSILIKFNQIGSLTETLAAIRMAKEAGYTAVISHRSGETEDATIADLAVGTAAGQIKTGSLCRSDRVAKYNQLLRIEEQLGEKAPYRGLKEIKGQA.

Residue glutamine 167 coordinates (2R)-2-phosphoglycerate. The Proton donor role is filled by glutamate 209. Mg(2+) is bound by residues aspartate 246, glutamate 289, and aspartate 316. (2R)-2-phosphoglycerate-binding residues include lysine 341, arginine 370, serine 371, and lysine 392. The active-site Proton acceptor is lysine 341.

The protein belongs to the enolase family. Component of the RNA degradosome, a multiprotein complex involved in RNA processing and mRNA degradation. The cofactor is Mg(2+).

The protein localises to the cytoplasm. Its subcellular location is the secreted. It localises to the cell surface. The enzyme catalyses (2R)-2-phosphoglycerate = phosphoenolpyruvate + H2O. It participates in carbohydrate degradation; glycolysis; pyruvate from D-glyceraldehyde 3-phosphate: step 4/5. Catalyzes the reversible conversion of 2-phosphoglycerate (2-PG) into phosphoenolpyruvate (PEP). It is essential for the degradation of carbohydrates via glycolysis. This is Enolase from Shewanella putrefaciens (strain CN-32 / ATCC BAA-453).